We begin with the raw amino-acid sequence, 212 residues long: Uridine kinase (212 aa).

13-20 (GASASGKS) lines the ATP pocket.

Belongs to the uridine kinase family.

It localises to the cytoplasm. The enzyme catalyses uridine + ATP = UMP + ADP + H(+). It catalyses the reaction cytidine + ATP = CMP + ADP + H(+). The protein operates within pyrimidine metabolism; CTP biosynthesis via salvage pathway; CTP from cytidine: step 1/3. It participates in pyrimidine metabolism; UMP biosynthesis via salvage pathway; UMP from uridine: step 1/1. This chain is Uridine kinase, found in Shewanella oneidensis (strain ATCC 700550 / JCM 31522 / CIP 106686 / LMG 19005 / NCIMB 14063 / MR-1).